Here is a 315-residue protein sequence, read N- to C-terminus: Methionyl-tRNA formyltransferase (315 aa).

113–116 provides a ligand contact to (6S)-5,6,7,8-tetrahydrofolate; that stretch reads SLLP.

It belongs to the Fmt family.

The catalysed reaction is L-methionyl-tRNA(fMet) + (6R)-10-formyltetrahydrofolate = N-formyl-L-methionyl-tRNA(fMet) + (6S)-5,6,7,8-tetrahydrofolate + H(+). Its function is as follows. Attaches a formyl group to the free amino group of methionyl-tRNA(fMet). The formyl group appears to play a dual role in the initiator identity of N-formylmethionyl-tRNA by promoting its recognition by IF2 and preventing the misappropriation of this tRNA by the elongation apparatus. The polypeptide is Methionyl-tRNA formyltransferase (Salmonella enteritidis PT4 (strain P125109)).